The primary structure comprises 156 residues: Small ribosomal subunit protein uS7 (156 aa).

The protein belongs to the universal ribosomal protein uS7 family. Part of the 30S ribosomal subunit. Contacts proteins S9 and S11.

One of the primary rRNA binding proteins, it binds directly to 16S rRNA where it nucleates assembly of the head domain of the 30S subunit. Is located at the subunit interface close to the decoding center, probably blocks exit of the E-site tRNA. The sequence is that of Small ribosomal subunit protein uS7 from Streptococcus gordonii (strain Challis / ATCC 35105 / BCRC 15272 / CH1 / DL1 / V288).